A 72-amino-acid polypeptide reads, in one-letter code: DNA-directed RNA polymerase subunit Rpo10 (72 aa).

4 residues coordinate Zn(2+): Cys-7, Cys-10, Cys-45, and Cys-46.

The protein belongs to the archaeal Rpo10/eukaryotic RPB10 RNA polymerase subunit family. As to quaternary structure, part of the RNA polymerase complex. The cofactor is Zn(2+).

The protein resides in the cytoplasm. The enzyme catalyses RNA(n) + a ribonucleoside 5'-triphosphate = RNA(n+1) + diphosphate. Its function is as follows. DNA-dependent RNA polymerase (RNAP) catalyzes the transcription of DNA into RNA using the four ribonucleoside triphosphates as substrates. In Methanopyrus kandleri (strain AV19 / DSM 6324 / JCM 9639 / NBRC 100938), this protein is DNA-directed RNA polymerase subunit Rpo10.